The primary structure comprises 440 residues: Ribulose bisphosphate carboxylase large chain (440 aa).

An N6,N6,N6-trimethyllysine modification is found at lysine 4. 2 residues coordinate substrate: asparagine 113 and threonine 163. Catalysis depends on lysine 165, which acts as the Proton acceptor. Substrate is bound at residue lysine 167. Mg(2+) contacts are provided by lysine 191, aspartate 193, and glutamate 194. Lysine 191 carries the N6-carboxylysine modification. The active-site Proton acceptor is the histidine 284. Residues arginine 285, histidine 317, and serine 369 each contribute to the substrate site.

The protein belongs to the RuBisCO large chain family. Type I subfamily. Heterohexadecamer of 8 large chains and 8 small chains; disulfide-linked. The disulfide link is formed within the large subunit homodimers. The cofactor is Mg(2+). The disulfide bond which can form in the large chain dimeric partners within the hexadecamer appears to be associated with oxidative stress and protein turnover.

It localises to the plastid. The protein localises to the chloroplast. It carries out the reaction 2 (2R)-3-phosphoglycerate + 2 H(+) = D-ribulose 1,5-bisphosphate + CO2 + H2O. The catalysed reaction is D-ribulose 1,5-bisphosphate + O2 = 2-phosphoglycolate + (2R)-3-phosphoglycerate + 2 H(+). In terms of biological role, ruBisCO catalyzes two reactions: the carboxylation of D-ribulose 1,5-bisphosphate, the primary event in carbon dioxide fixation, as well as the oxidative fragmentation of the pentose substrate in the photorespiration process. Both reactions occur simultaneously and in competition at the same active site. In Onoclea sensibilis (Sensitive fern), this protein is Ribulose bisphosphate carboxylase large chain.